The chain runs to 88 residues: Putative membrane protein insertion efficiency factor (88 aa).

It belongs to the UPF0161 family.

Its subcellular location is the cell inner membrane. Could be involved in insertion of integral membrane proteins into the membrane. The polypeptide is Putative membrane protein insertion efficiency factor (Koribacter versatilis (strain Ellin345)).